The sequence spans 455 residues: MNAHGLSTEKAAAFTRRLRAEPQFLLAQNVATCSDPLEVCLQRQVVQDTIQVFQHAVPAEGKPVTNQKNSGRCWIFSCLNAMRLPFMKKYNIEEFEFSQSYLFFWDKVERCYYFLNAFVETAQKKEPIDGRLVQFLLTNPTNDGGQWDMLVNIVEKYGVVPKKYFPESHTTEATRRMNEILNHKMREYCLRLRNMVATGTNKEELCAAMDTMIEEVFRIVSTCLGNPPETFCWEFRDKEKNYHKFGPMTPVQFYNEHVKPYFNMEDKVCLVNDPRPQNPYCQLYTVEYLGNMAGGRKTLYNNQPIEVLKKLAATSIKDGEAVWFGCDVAKHFYSKLGINDLNIFNHELVFGVSVKNMNKAERLIFGDSLMTHAMVLTAVSEKDGQEDCYEKWRVENSWGEDRGNKGYLIMTDDWFSEYVYEVVVDKKYVPEDVLAVMEQEPIVLPAWDPMGALAK.

Residues cysteine 73, histidine 372, and asparagine 396 contribute to the active site.

The protein belongs to the peptidase C1 family. As to quaternary structure, homooctamer.

Its subcellular location is the cytoplasm. The enzyme catalyses Inactivates bleomycin B2 (a cytotoxic glycometallopeptide) by hydrolysis of a carboxyamide bond of beta-aminoalanine, but also shows general aminopeptidase activity. The specificity varies somewhat with source, but amino acid arylamides of Met, Leu and Ala are preferred.. Its function is as follows. The normal physiological role of BLM hydrolase is unknown, but it catalyzes the inactivation of the antitumor drug BLM (a glycopeptide) by hydrolyzing the carboxamide bond of its B-aminoalaninamide moiety thus protecting normal and malignant cells from BLM toxicity. This Gallus gallus (Chicken) protein is Bleomycin hydrolase (BLMH).